Here is a 250-residue protein sequence, read N- to C-terminus: Coproheme decarboxylase (250 aa).

Fe-coproporphyrin III is bound by residues Arg-131, 145–149 (YPMNK), His-172, and Gln-185. The active site involves Tyr-145.

The protein belongs to the ChdC family. Type 1 subfamily. Requires Fe-coproporphyrin III as cofactor.

It catalyses the reaction Fe-coproporphyrin III + 2 H2O2 + 2 H(+) = heme b + 2 CO2 + 4 H2O. The catalysed reaction is Fe-coproporphyrin III + H2O2 + H(+) = harderoheme III + CO2 + 2 H2O. It carries out the reaction harderoheme III + H2O2 + H(+) = heme b + CO2 + 2 H2O. It functions in the pathway porphyrin-containing compound metabolism; protoheme biosynthesis. Its function is as follows. Involved in coproporphyrin-dependent heme b biosynthesis. Catalyzes the decarboxylation of Fe-coproporphyrin III (coproheme) to heme b (protoheme IX), the last step of the pathway. The reaction occurs in a stepwise manner with a three-propionate intermediate. This is Coproheme decarboxylase from Staphylococcus aureus (strain bovine RF122 / ET3-1).